A 163-amino-acid polypeptide reads, in one-letter code: Large ribosomal subunit protein bL17 (163 aa).

The segment at 127–163 (VAKKATRTRRSKKSAEAAAPAAVEAPATEEPKAESAE) is disordered. Residues 129–138 (KKATRTRRSK) are compositionally biased toward basic residues. The span at 142 to 154 (EAAAPAAVEAPAT) shows a compositional bias: low complexity.

The protein belongs to the bacterial ribosomal protein bL17 family. Part of the 50S ribosomal subunit. Contacts protein L32.

In Bacteroides thetaiotaomicron (strain ATCC 29148 / DSM 2079 / JCM 5827 / CCUG 10774 / NCTC 10582 / VPI-5482 / E50), this protein is Large ribosomal subunit protein bL17.